Consider the following 394-residue polypeptide: Junctional adhesion molecule-like (394 aa).

A signal peptide spans methionine 1–glycine 19. Ig-like V-type domains follow at residues leucine 20 to valine 132 and proline 137 to histidine 250. Residues leucine 20–leucine 275 lie on the Extracellular side of the membrane. Disulfide bonds link cysteine 42-cysteine 116 and cysteine 155-cysteine 234. N-linked (GlcNAc...) asparagine glycans are attached at residues asparagine 76 and asparagine 231. A helical membrane pass occupies residues valine 276–valine 296. Topologically, residues lysine 297–phenylalanine 394 are cytoplasmic. A disordered region spans residues proline 369–phenylalanine 394. The segment covering arginine 372–serine 383 has biased composition (basic and acidic residues).

It belongs to the immunoglobulin superfamily. As to quaternary structure, homodimer; active form in leukocyte-endothelial cell adhesion. Interacts (homodimeric form) with CXADR. Interacts (via cytoplasmic domain) with the PI3 kinase; upon CXADR-binding. Interacts with ITGA4 and ITGB1; integrin alpha-4/beta-1 may regulate leukocyte to endothelial cells adhesion by controlling JAML homodimerization. In terms of tissue distribution, expression is restricted to the hematopoietic tissues with the exception of liver. Expressed in fetal liver, spleen and thymus. Preferentially expressed by mature leukocytes (at protein level).

The protein localises to the cell membrane. It localises to the cell junction. In terms of biological role, transmembrane protein of the plasma membrane of leukocytes that control their migration and activation through interaction with CXADR, a plasma membrane receptor found on adjacent epithelial and endothelial cells. The interaction between both receptors mediates the activation of gamma-delta T-cells, a subpopulation of T-cells residing in epithelia and involved in tissue homeostasis and repair. Upon epithelial CXADR-binding, JAML induces downstream cell signaling events in gamma-delta T-cells through PI3-kinase and MAP kinases. It results in proliferation and production of cytokines and growth factors by T-cells that in turn stimulate epithelial tissues repair. It also controls the transmigration of leukocytes within epithelial and endothelial tissues through adhesive interactions with epithelial and endothelial CXADR. This Homo sapiens (Human) protein is Junctional adhesion molecule-like.